We begin with the raw amino-acid sequence, 460 residues long: Squalene synthase (460 aa).

Residues 425 to 445 traverse the membrane as a helical segment; it reads ISILFVFFIILVCLAVIFYVF.

It belongs to the phytoene/squalene synthase family. As to quaternary structure, interacts with pof14. Requires Mg(2+) as cofactor.

It localises to the endoplasmic reticulum membrane. The catalysed reaction is 2 (2E,6E)-farnesyl diphosphate + NADPH + H(+) = squalene + 2 diphosphate + NADP(+). It catalyses the reaction 2 (2E,6E)-farnesyl diphosphate + NADH + H(+) = squalene + 2 diphosphate + NAD(+). It participates in terpene metabolism; lanosterol biosynthesis; lanosterol from farnesyl diphosphate: step 1/3. The protein operates within steroid metabolism; ergosterol biosynthesis. Squalene synthase; part of the third module of ergosterol biosynthesis pathway that includes by the late steps of the pathway. Erg9 produces squalene from 2 farnesyl pyrophosphate moieties. The third module or late pathway involves the ergosterol synthesis itself through consecutive reactions that mainly occur in the endoplasmic reticulum (ER) membrane. Firstly, the squalene synthase erg9 catalyzes the condensation of 2 farnesyl pyrophosphate moieties to form squalene, which is the precursor of all steroids. Secondly, squalene is converted into lanosterol by the consecutive action of the squalene epoxidase erg1 and the lanosterol synthase erg7. The lanosterol 14-alpha-demethylase erg11/cyp1 catalyzes C14-demethylation of lanosterol to produce 4,4'-dimethyl cholesta-8,14,24-triene-3-beta-ol. In the next steps, a complex process involving various demethylation, reduction and desaturation reactions catalyzed by the C-14 reductase erg24 and the C-4 demethylation complex erg25-erg26-erg27 leads to the production of zymosterol. Erg28 likely functions in the C-4 demethylation complex reaction by tethering erg26 and Erg27 to the endoplasmic reticulum or to facilitate interaction between these proteins. Then, the sterol 24-C-methyltransferase erg6 catalyzes the methyl transfer from S-adenosyl-methionine to the C-24 of zymosterol to form fecosterol. The C-8 sterol isomerase erg2 catalyzes the reaction which results in unsaturation at C-7 in the B ring of sterols and thus converts fecosterol to episterol. The sterol-C5-desaturases erg31 and erg32 then catalyze the introduction of a C-5 double bond in the B ring to produce 5-dehydroepisterol. The C-22 sterol desaturase erg5 further converts 5-dehydroepisterol into ergosta-5,7,22,24(28)-tetraen-3beta-ol by forming the C-22(23) double bond in the sterol side chain. Finally, ergosta-5,7,22,24(28)-tetraen-3beta-ol is substrate of the C-24(28) sterol reductase erg4 to produce ergosterol. In the genus Schizosaccharomyces, a second route exists between lanosterol and fecosterol, via the methylation of lanosterol to eburicol by erg6, followed by C14-demethylation by erg11/cyp1 and C4-demethylation by the demethylation complex erg25-erg26-erg27. The protein is Squalene synthase of Schizosaccharomyces pombe (strain 972 / ATCC 24843) (Fission yeast).